The sequence spans 473 residues: Photosystem II CP43 reaction center protein (473 aa).

Positions 1–14 are excised as a propeptide; the sequence is MKTLYSLRRFYPVE. Thr-15 is subject to N-acetylthreonine. The residue at position 15 (Thr-15) is a Phosphothreonine. Helical transmembrane passes span 69–93, 134–155, 178–200, 255–275, and 291–312; these read LFEV…PHLA, LLGP…KDRN, KALY…RKIT, KPFA…LSYS, and WFNN…ASQA. Residue Glu-367 participates in [CaMn4O5] cluster binding. A helical transmembrane segment spans residues 447–471; sequence RARAAAAGFEKGIDRDFEPVLSMTP.

This sequence belongs to the PsbB/PsbC family. PsbC subfamily. PSII is composed of 1 copy each of membrane proteins PsbA, PsbB, PsbC, PsbD, PsbE, PsbF, PsbH, PsbI, PsbJ, PsbK, PsbL, PsbM, PsbT, PsbX, PsbY, PsbZ, Psb30/Ycf12, at least 3 peripheral proteins of the oxygen-evolving complex and a large number of cofactors. It forms dimeric complexes. Binds multiple chlorophylls and provides some of the ligands for the Ca-4Mn-5O cluster of the oxygen-evolving complex. It may also provide a ligand for a Cl- that is required for oxygen evolution. PSII binds additional chlorophylls, carotenoids and specific lipids. serves as cofactor.

Its subcellular location is the plastid. The protein localises to the chloroplast thylakoid membrane. Functionally, one of the components of the core complex of photosystem II (PSII). It binds chlorophyll and helps catalyze the primary light-induced photochemical processes of PSII. PSII is a light-driven water:plastoquinone oxidoreductase, using light energy to abstract electrons from H(2)O, generating O(2) and a proton gradient subsequently used for ATP formation. The chain is Photosystem II CP43 reaction center protein from Piper cenocladum (Ant piper).